Reading from the N-terminus, the 669-residue chain is GTP-binding protein 1 (669 aa).

The interval 1-32 (MATERSRSAMDSPVPASMFAPEPSSPGAARAA) is disordered. Phosphoserine is present on residues serine 6, serine 8, serine 12, serine 24, serine 25, serine 44, serine 47, and serine 69. A tr-type G domain is found at 158-389 (FLEVRVAVVG…LNLLSPRTSY (232 aa)). The G1 stretch occupies residues 167–174 (GNVDAGKS). A GTP-binding site is contributed by 167 to 174 (GNVDAGKS). The segment at 206–210 (GRTSS) is G2. A G3 region spans residues 252–255 (DLAG). GTP contacts are provided by residues 252 to 256 (DLAGH) and 308 to 311 (TKID). Residues 308 to 311 (TKID) are G4. Positions 366-368 (SNV) are G5. Over residues 573-595 (LLQTTNNSPMNSKPQQIKMQSTK) the composition is skewed to polar residues. Residues 573–669 (LLQTTNNSPM…GACVTPASGC (97 aa)) form a disordered region. Serine 580 bears the Phosphoserine mark. The span at 646–657 (GRRRGGQRHKVK) shows a compositional bias: basic residues.

This sequence belongs to the TRAFAC class translation factor GTPase superfamily. Classic translation factor GTPase family. GTPBP1 subfamily. Interacts with EXOSC2/RRP4, EXOSC3/RRP40, EXOSC5/RRP46, HNRNPD, HNRNPR and SYNCRIP. Identified in a complex with AANAT mRNA, but does not bind mRNA by itself.

The protein resides in the cytoplasm. Promotes degradation of target mRNA species. Plays a role in the regulation of circadian mRNA stability. Binds GTP and has GTPase activity. The polypeptide is GTP-binding protein 1 (GTPBP1) (Homo sapiens (Human)).